Reading from the N-terminus, the 159-residue chain is SsrA-binding protein (159 aa).

A compositionally biased stretch (basic and acidic residues) spans 137–147 (LAERQANRETE). The tract at residues 137 to 159 (LAERQANRETEQAVGRRLKGMHD) is disordered.

It belongs to the SmpB family.

It is found in the cytoplasm. Functionally, required for rescue of stalled ribosomes mediated by trans-translation. Binds to transfer-messenger RNA (tmRNA), required for stable association of tmRNA with ribosomes. tmRNA and SmpB together mimic tRNA shape, replacing the anticodon stem-loop with SmpB. tmRNA is encoded by the ssrA gene; the 2 termini fold to resemble tRNA(Ala) and it encodes a 'tag peptide', a short internal open reading frame. During trans-translation Ala-aminoacylated tmRNA acts like a tRNA, entering the A-site of stalled ribosomes, displacing the stalled mRNA. The ribosome then switches to translate the ORF on the tmRNA; the nascent peptide is terminated with the 'tag peptide' encoded by the tmRNA and targeted for degradation. The ribosome is freed to recommence translation, which seems to be the essential function of trans-translation. The sequence is that of SsrA-binding protein from Nocardioides sp. (strain ATCC BAA-499 / JS614).